A 439-amino-acid chain; its full sequence is MTVTIIGAGLAGAEAAWQIVRQGVPVQLFEMRPTEMTPAHKTGNFAELVCSNSLRGAALENAVGLLKEEMRRLGSLIMEAADAHAVPAGGALAVDREGFSACITEKLVNHPRITLCREEIREIPAARPLIIASGPLTSPALSRAIQGLTGEDYFYFYDAAAPIVYAESVDLSVAFWASRYDKGDADYLNCPMDESEYDRFYEALVTAEAHPLKEFEKEIYFEGCMPVEVMAKRGKQTLLFGPLKPVGLIDPRTGRRPFAVVQLRKENRQGSMYNLVGFQTHLKWPEQKRVFRMIPGLEQAEFVRYGVMHRNTFINSPTLLLPTYQLRKDPSVFFAGQITGVEGYVESAAAGLVAGLNAARLVQGRSPLRFPPETAIGALPAYITTAEAKHFQPMNVTYGLFPPLVEKVKGKRPRQQAHARRALESLERFMAENLIVKEI.

7-12 (GAGLAG) serves as a coordination point for FAD.

The protein belongs to the MnmG family. TrmFO subfamily. The cofactor is FAD.

Its subcellular location is the cytoplasm. It catalyses the reaction uridine(54) in tRNA + (6R)-5,10-methylene-5,6,7,8-tetrahydrofolate + NADH + H(+) = 5-methyluridine(54) in tRNA + (6S)-5,6,7,8-tetrahydrofolate + NAD(+). The enzyme catalyses uridine(54) in tRNA + (6R)-5,10-methylene-5,6,7,8-tetrahydrofolate + NADPH + H(+) = 5-methyluridine(54) in tRNA + (6S)-5,6,7,8-tetrahydrofolate + NADP(+). Functionally, catalyzes the folate-dependent formation of 5-methyl-uridine at position 54 (M-5-U54) in all tRNAs. This Heliobacterium modesticaldum (strain ATCC 51547 / Ice1) protein is Methylenetetrahydrofolate--tRNA-(uracil-5-)-methyltransferase TrmFO.